A 179-amino-acid chain; its full sequence is 3-hydroxyanthranilate 3,4-dioxygenase (179 aa).

Position 47 (Arg47) interacts with O2. 3 residues coordinate Fe cation: His51, Glu57, and His96. Glu57 provides a ligand contact to substrate. Residues Arg100 and Glu110 each coordinate substrate. The Fe cation site is built by Cys125, Cys128, Cys162, and Cys165.

Belongs to the 3-HAO family. The cofactor is Fe(2+).

It catalyses the reaction 3-hydroxyanthranilate + O2 = (2Z,4Z)-2-amino-3-carboxymuconate 6-semialdehyde. It participates in cofactor biosynthesis; NAD(+) biosynthesis; quinolinate from L-kynurenine: step 3/3. Functionally, catalyzes the oxidative ring opening of 3-hydroxyanthranilate to 2-amino-3-carboxymuconate semialdehyde, which spontaneously cyclizes to quinolinate. The protein is 3-hydroxyanthranilate 3,4-dioxygenase of Bacillus cereus (strain ATCC 10987 / NRS 248).